A 230-amino-acid chain; its full sequence is Sugar fermentation stimulation protein homolog (230 aa).

The protein belongs to the SfsA family.

The polypeptide is Sugar fermentation stimulation protein homolog (Clostridium botulinum (strain Loch Maree / Type A3)).